The primary structure comprises 154 residues: OCIA domain-containing protein 2 (154 aa).

The segment at M1–S23 is disordered. The OCIA domain maps to M1 to A120. N6-acetyllysine is present on K41.

In terms of assembly, interacts (via OCIA domain) with OCIAD1/ASRIJ and STAT3.

The protein localises to the endosome. The protein resides in the mitochondrion. Its subcellular location is the mitochondrion inner membrane. Functionally, has an essential role in the assembly of mitochondrial respiratory chain complex III. Is also required for STAT3 activation and plays a role in cell migration. This chain is OCIA domain-containing protein 2 (OCIAD2), found in Bos taurus (Bovine).